Consider the following 123-residue polypeptide: Large ribosomal subunit protein bL12 (123 aa).

It belongs to the bacterial ribosomal protein bL12 family. Homodimer. Part of the ribosomal stalk of the 50S ribosomal subunit. Forms a multimeric L10(L12)X complex, where L10 forms an elongated spine to which 2 to 4 L12 dimers bind in a sequential fashion. Binds GTP-bound translation factors.

Its function is as follows. Forms part of the ribosomal stalk which helps the ribosome interact with GTP-bound translation factors. Is thus essential for accurate translation. This is Large ribosomal subunit protein bL12 from Rhodopseudomonas palustris (strain HaA2).